The sequence spans 371 residues: Cytochrome b (371 aa).

A run of 4 helical transmembrane segments spans residues 25–45 (FGSM…FLAI), 69–90 (WTMQ…YTHI), 105–125 (WLSG…GYVL), and 170–190 (FFAL…VHII). H75 and H89 together coordinate heme b. Residues H174 and H188 each coordinate heme b. Position 193 (H193) interacts with a ubiquinone. The next 4 helical transmembrane spans lie at 218-238 (YKDM…MSFS), 280-300 (LGGT…PFTH), 312-332 (FTQL…WTAT), and 339-358 (FILI…IINP).

This sequence belongs to the cytochrome b family. The cytochrome bc1 complex contains 3 respiratory subunits (MT-CYB, CYC1 and UQCRFS1), 2 core proteins (UQCRC1 and UQCRC2) and probably 6 low-molecular weight proteins. It depends on heme b as a cofactor.

The protein resides in the mitochondrion inner membrane. Its function is as follows. Component of the ubiquinol-cytochrome c reductase complex (complex III or cytochrome b-c1 complex) that is part of the mitochondrial respiratory chain. The b-c1 complex mediates electron transfer from ubiquinol to cytochrome c. Contributes to the generation of a proton gradient across the mitochondrial membrane that is then used for ATP synthesis. In Elapognathus coronatus (Western crowned snake), this protein is Cytochrome b (MT-CYB).